Reading from the N-terminus, the 261-residue chain is Thiazole synthase (261 aa).

K97 serves as the catalytic Schiff-base intermediate with DXP. 1-deoxy-D-xylulose 5-phosphate contacts are provided by residues G158, 184-185 (AG), and 206-207 (AS).

This sequence belongs to the ThiG family. In terms of assembly, homotetramer. Forms heterodimers with either ThiH or ThiS.

It is found in the cytoplasm. It carries out the reaction [ThiS sulfur-carrier protein]-C-terminal-Gly-aminoethanethioate + 2-iminoacetate + 1-deoxy-D-xylulose 5-phosphate = [ThiS sulfur-carrier protein]-C-terminal Gly-Gly + 2-[(2R,5Z)-2-carboxy-4-methylthiazol-5(2H)-ylidene]ethyl phosphate + 2 H2O + H(+). The protein operates within cofactor biosynthesis; thiamine diphosphate biosynthesis. Functionally, catalyzes the rearrangement of 1-deoxy-D-xylulose 5-phosphate (DXP) to produce the thiazole phosphate moiety of thiamine. Sulfur is provided by the thiocarboxylate moiety of the carrier protein ThiS. In vitro, sulfur can be provided by H(2)S. The polypeptide is Thiazole synthase (Corynebacterium diphtheriae (strain ATCC 700971 / NCTC 13129 / Biotype gravis)).